The following is a 333-amino-acid chain: Transaldolase (333 aa).

The active-site Schiff-base intermediate with substrate is Lys135.

The protein belongs to the transaldolase family. Type 1 subfamily. Homodimer.

The protein resides in the cytoplasm. The enzyme catalyses D-sedoheptulose 7-phosphate + D-glyceraldehyde 3-phosphate = D-erythrose 4-phosphate + beta-D-fructose 6-phosphate. It participates in carbohydrate degradation; pentose phosphate pathway; D-glyceraldehyde 3-phosphate and beta-D-fructose 6-phosphate from D-ribose 5-phosphate and D-xylulose 5-phosphate (non-oxidative stage): step 2/3. Its function is as follows. Transaldolase is important for the balance of metabolites in the pentose-phosphate pathway. The chain is Transaldolase from Prochlorococcus marinus (strain MIT 9301).